The sequence spans 431 residues: Asparagine--tRNA ligase 1 (431 aa).

Belongs to the class-II aminoacyl-tRNA synthetase family. In terms of assembly, homodimer.

Its subcellular location is the cytoplasm. It carries out the reaction tRNA(Asn) + L-asparagine + ATP = L-asparaginyl-tRNA(Asn) + AMP + diphosphate + H(+). This is Asparagine--tRNA ligase 1 (asnS1) from Lactiplantibacillus plantarum (strain ATCC BAA-793 / NCIMB 8826 / WCFS1) (Lactobacillus plantarum).